We begin with the raw amino-acid sequence, 514 residues long: Histidine ammonia-lyase (514 aa).

Residues 142–144 (ASG) constitute a cross-link (5-imidazolinone (Ala-Gly)). Residue serine 143 is modified to 2,3-didehydroalanine (Ser).

This sequence belongs to the PAL/histidase family. Post-translationally, contains an active site 4-methylidene-imidazol-5-one (MIO), which is formed autocatalytically by cyclization and dehydration of residues Ala-Ser-Gly.

It localises to the cytoplasm. It catalyses the reaction L-histidine = trans-urocanate + NH4(+). The protein operates within amino-acid degradation; L-histidine degradation into L-glutamate; N-formimidoyl-L-glutamate from L-histidine: step 1/3. This Sorangium cellulosum (strain So ce56) (Polyangium cellulosum (strain So ce56)) protein is Histidine ammonia-lyase.